The primary structure comprises 577 residues: Aspartate--tRNA(Asp/Asn) ligase (577 aa).

Glutamate 171 lines the L-aspartate pocket. An aspartate region spans residues 195-198 (QLFK). Residue arginine 217 participates in L-aspartate binding. ATP-binding positions include 217–219 (RDE) and glutamine 226. Residue histidine 444 coordinates L-aspartate. Glutamate 474 is an ATP binding site. Arginine 481 provides a ligand contact to L-aspartate. Residue 526 to 529 (GFDR) coordinates ATP.

It belongs to the class-II aminoacyl-tRNA synthetase family. Type 1 subfamily. As to quaternary structure, homodimer.

It localises to the cytoplasm. The catalysed reaction is tRNA(Asx) + L-aspartate + ATP = L-aspartyl-tRNA(Asx) + AMP + diphosphate. In terms of biological role, aspartyl-tRNA synthetase with relaxed tRNA specificity since it is able to aspartylate not only its cognate tRNA(Asp) but also tRNA(Asn). Is 1.7 times more efficient at aminoacylating tRNA(Asp) over tRNA(Asn). Reaction proceeds in two steps: L-aspartate is first activated by ATP to form Asp-AMP and then transferred to the acceptor end of tRNA(Asp/Asn). This is Aspartate--tRNA(Asp/Asn) ligase from Helicobacter pylori (strain ATCC 700392 / 26695) (Campylobacter pylori).